We begin with the raw amino-acid sequence, 166 residues long: MKTPRIPIAIQQAVMRSLREHLANANRKLERRYAEPTLVYQQRGTSAGTAWLEKNEIRLNPVLLLENQREFIDEVVPHELAHLLVWQHFGRVAPHGKEWKWMMESVLGVPARRTHRFELASVRQNTFPYRCRCQQHQLTVRRHNRVVRGEATYRCVRCGDLLVAEK.

Residues 20 to 164 form the SprT-like domain; sequence EHLANANRKL…CVRCGDLLVA (145 aa). His-78 is a binding site for Zn(2+). The active site involves Glu-79. His-82 contacts Zn(2+).

This sequence belongs to the SprT family. It depends on Zn(2+) as a cofactor.

It is found in the cytoplasm. This Klebsiella pneumoniae subsp. pneumoniae (strain ATCC 700721 / MGH 78578) protein is Protein SprT.